The sequence spans 378 residues: Glutamate 5-kinase (378 aa).

Lys19 is a binding site for ATP. Positions 59, 146, and 158 each coordinate substrate. 178-179 (TD) is an ATP binding site. The 79-residue stretch at 285–363 (RGSVAVDAGA…SEFERLLGYT (79 aa)) folds into the PUA domain.

This sequence belongs to the glutamate 5-kinase family.

It localises to the cytoplasm. It carries out the reaction L-glutamate + ATP = L-glutamyl 5-phosphate + ADP. Its pathway is amino-acid biosynthesis; L-proline biosynthesis; L-glutamate 5-semialdehyde from L-glutamate: step 1/2. In terms of biological role, catalyzes the transfer of a phosphate group to glutamate to form L-glutamate 5-phosphate. This Polaromonas sp. (strain JS666 / ATCC BAA-500) protein is Glutamate 5-kinase.